A 507-amino-acid chain; its full sequence is MSQLVLILGDQLSPSIAALDGVDKKQDTIVLCEVMAEASYVGHHKKKIAFIFSAMRHFAEELRGEGYRVRYTRIDDADNAGSFTGEVKRAIDDLTPSRICVTEPGEWRVRSEMDGFAGAFGIQVDIRSDRRFLSSHGEFRNWAAGRKSLTMEYFYREMRRKTGLLMNGEQPVGGRWNFDAENRQPARPDLLRPKHPVFAPDKITKEVIDTVERLFPDNFGKLENFGFAVTRTDAERALSAFIDDFLCNFGATQDAMLQDDPNLNHSLLSFYINCGLLDALDVCKAAERAYHEGGAPLNAVEGFIRQIIGWREYMRGIYWLAGPDYVDSNFFENDRSLPVFYWTGKTHMNCMAKVITETIENAYAHHIQRLMITGNFALLAGIDPKAVHRWYLEVYADAYEWVELPNVIGMSQFADGGFLGTKPYAASGNYINRMSDYCDTCRYDPKERLGDNACPFNALYWDFLARNREKLKSNHRLAQPYATWARMSEDVRHDLRAKAAAFLRKLD.

Residues 9 to 10, 32 to 40, and glycine 105 contribute to the 6,7-dimethyl-8-(1-D-ribityl)lumazine site; these read GD and CEVMAEASY. Residues 265–269 and asparagine 273 contribute to the FAD site; that span reads HSLLS. Residue cysteine 350 participates in [4Fe-4S] cluster binding. FAD-binding positions include 363 to 366, aspartate 397, and asparagine 406; that span reads YAHH. [4Fe-4S] cluster contacts are provided by cysteine 438, cysteine 441, and cysteine 454.

This sequence belongs to the iron-sulfur bacterial cryptochrome/photolyase (FeS-BCP) family. Requires FAD as cofactor. 6,7-dimethyl-8-(1-D-ribityl)lumazine is required as a cofactor. [4Fe-4S] cluster serves as cofactor.

It catalyses the reaction (6-4) photoproduct (in DNA) = 2 pyrimidine residues (in DNA).. In terms of biological role, photolyase involved in the repair of UV-induced (6-4) lesions in DNA. Catalyzes the photoreactivation of (6-4) pyrimidine-pyrimidone photoproducts by using blue-light energy. Can repair (6-4) photoproducts in ssDNA as well as in dsDNA. In Agrobacterium fabrum (strain C58 / ATCC 33970) (Agrobacterium tumefaciens (strain C58)), this protein is (6-4) photolyase.